Reading from the N-terminus, the 202-residue chain is 3-isopropylmalate dehydratase small subunit (202 aa).

It belongs to the LeuD family. LeuD type 1 subfamily. As to quaternary structure, heterodimer of LeuC and LeuD.

The catalysed reaction is (2R,3S)-3-isopropylmalate = (2S)-2-isopropylmalate. It functions in the pathway amino-acid biosynthesis; L-leucine biosynthesis; L-leucine from 3-methyl-2-oxobutanoate: step 2/4. Catalyzes the isomerization between 2-isopropylmalate and 3-isopropylmalate, via the formation of 2-isopropylmaleate. The protein is 3-isopropylmalate dehydratase small subunit of Blochmanniella pennsylvanica (strain BPEN).